The following is a 969-amino-acid chain: Proprotein convertase subtilisin/kexin type 6 (969 aa).

A compositionally biased stretch (pro residues) spans 1 to 16; the sequence is MPPRAPPAPGPRPPPR. Residues 1–39 form a disordered region; that stretch reads MPPRAPPAPGPRPPPRAAAATDTAAGAGGAGGAGGAGGP. Residues 1-63 form the signal peptide; sequence MPPRAPPAPG…LLALPAACSA (63 aa). Positions 26-39 are enriched in gly residues; the sequence is GAGGAGGAGGAGGP. A propeptide spanning residues 64–149 is cleaved from the precursor; the sequence is PPPRPVYTNH…QQEVKRRVKR (86 aa). The 320-residue stretch at 168-487 folds into the Peptidase S8 domain; it reads MWYLHCGDKN…FGLVDAEALV (320 aa). Active-site charge relay system residues include Asp-205 and His-246. An N-linked (GlcNAc...) asparagine glycan is attached at Asn-259. Ser-420 acts as the Charge relay system in catalysis. A P/Homo B domain is found at 495–635; the sequence is AVPSQHMCVA…SLILYGTAEH (141 aa). Residues 553-555 carry the Cell attachment site motif; sequence RGD. The interval 658–683 is disordered; that stretch reads EPPKAALSPSQVEVPEDEEDYTAQST. FU repeat units lie at residues 692–739, 743–790, 794–838, 842–887, and 895–943; these read TSVC…GYFG, ARRC…GFYA, QKNC…GTYF, LIRC…GFYP, and HKVC…ETFC. Residues 695-930 form a CRM (Cys-rich motif) region; that stretch reads CHPECGDKGC…GFTQLGTSCI (236 aa). 2 N-linked (GlcNAc...) asparagine glycosylation sites follow: Asn-914 and Asn-932. The PLAC domain maps to 931-969; sequence TNHTCSNADETFCEMVKSNRLCERKLFIQFCCRTCLLAG.

It belongs to the peptidase S8 family. The PACE4A-I precursor protein seems to exist in the reticulum endoplasmic as both a monomer and a dimer-sized complex whereas mature PACE4A-I exists only as a monomer, suggesting that propeptide cleavage affects its tertiary or quaternary structure. Interacts (immature form including the propeptide) with RCN3; probably involved in the maturation and the secretion of PCSK6. Ca(2+) serves as cofactor. Each PACE4 isoform exhibits a unique restricted distribution. Isoform PACE4A-I is expressed in heart, brain, placenta, lung, skeletal muscle, kidney, pancreas, but at comparatively higher levels in the liver. Isoform PACE4A-II is at least expressed in placenta. Isoform PACE4B was only found in the embryonic kidney cell line from which it was isolated. Isoform PACE4C and isoform PACE4D are expressed in placenta. Isoform PACE4E-I is expressed in cerebellum, placenta and pituitary. Isoform PACE4E-II is at least present in cerebellum.

The protein resides in the secreted. It is found in the endoplasmic reticulum. The protein localises to the endomembrane system. Its function is as follows. Serine endoprotease that processes various proproteins by cleavage at paired basic amino acids, recognizing the RXXX[KR]R consensus motif. Likely functions in the constitutive secretory pathway, with unique restricted distribution in both neuroendocrine and non-neuroendocrine tissues. The chain is Proprotein convertase subtilisin/kexin type 6 (PCSK6) from Homo sapiens (Human).